The following is a 511-amino-acid chain: 2'-5'-oligoadenylate synthase-like protein 1 (511 aa).

2 consecutive Ubiquitin-like domains span residues 350-429 and 430-506; these read IQVT…ISPE and IQVF…EGAA.

The protein belongs to the 2-5A synthase family. In terms of assembly, specifically interacts with the ligand binding domain of the thyroid receptor (TR). TRIP14 does not require the presence of thyroid hormone for its interaction. Binds MBD1.

Its subcellular location is the nucleus. The protein resides in the nucleolus. It is found in the cytoplasm. In terms of biological role, does not have 2'-5'-OAS activity, but can bind double-stranded RNA. Displays antiviral activity via an alternative antiviral pathway independent of RNase L. This is 2'-5'-oligoadenylate synthase-like protein 1 (Oasl1) from Mus musculus (Mouse).